A 549-amino-acid polypeptide reads, in one-letter code: MTNVVVSGEQLQEAFREVAAIVDSTVAITAGPRGKTVGINKPYGAPEITKDGYKVMKGIKPEKPLNAAIASIFAQSCSQCNDKVGDGTTTCSILTSNMIMEASKSIAAGNDRVGIKNGIQKAKDVILKEIASMSRTISLEKIDEVAQVAIISANGDKDIGNSIADSVKKVGKEGVITVEESKGSKELEVELTTGMQFDRGYLSPYFITNNEKMIVELDNPYLLITEKKLNIIQPLLPILEAIVKSGKPLVIIAEDIEGEALSTLVINKLRGGLKVAAVKAPGFGDRRKEMLEDIATLTGAKYVIKDELGIKMEDLTLDDLGTAKNVKITKDNTTVVSENSDSDSVKARIEQIKSQIETSTSDYDKEKLRERLAKLSGGVAVLKVGGATEVEVKERRDRVEDALHATRAAIEEGIVPGGGVALLYASSVLDKLKGASDEEQIGINIIKKVLSAPIRRLVKNAGLESAVIIDYLIKQNDKELIYNVEAMNYANAFTAGVIDPAKVVRIAFETAVSVASVLITTESMIVDVPSKENASSPMGAGEMSGMGGF.

Residues 29 to 32 (TAGP), K50, 86 to 90 (DGTTT), G418, and D499 each bind ATP.

Belongs to the chaperonin (HSP60) family. Forms a cylinder of 14 subunits composed of two heptameric rings stacked back-to-back. Interacts with the co-chaperonin GroES.

Its subcellular location is the cytoplasm. The enzyme catalyses ATP + H2O + a folded polypeptide = ADP + phosphate + an unfolded polypeptide.. Together with its co-chaperonin GroES, plays an essential role in assisting protein folding. The GroEL-GroES system forms a nano-cage that allows encapsulation of the non-native substrate proteins and provides a physical environment optimized to promote and accelerate protein folding. The chain is Chaperonin GroEL from Wolbachia pipientis wMel.